The sequence spans 79 residues: NAD(P)H-quinone oxidoreductase subunit L (79 aa).

2 consecutive transmembrane segments (helical) span residues 10–30 (IIIA…IPAV) and 48–68 (GFMY…SPFL).

The protein belongs to the complex I NdhL subunit family. NDH-1 can be composed of about 15 different subunits; different subcomplexes with different compositions have been identified which probably have different functions.

It is found in the cellular thylakoid membrane. The catalysed reaction is a plastoquinone + NADH + (n+1) H(+)(in) = a plastoquinol + NAD(+) + n H(+)(out). It catalyses the reaction a plastoquinone + NADPH + (n+1) H(+)(in) = a plastoquinol + NADP(+) + n H(+)(out). Functionally, NDH-1 shuttles electrons from an unknown electron donor, via FMN and iron-sulfur (Fe-S) centers, to quinones in the respiratory and/or the photosynthetic chain. The immediate electron acceptor for the enzyme in this species is believed to be plastoquinone. Couples the redox reaction to proton translocation, and thus conserves the redox energy in a proton gradient. Cyanobacterial NDH-1 also plays a role in inorganic carbon-concentration. In Microcystis aeruginosa (strain NIES-843 / IAM M-2473), this protein is NAD(P)H-quinone oxidoreductase subunit L.